Reading from the N-terminus, the 193-residue chain is Acyl-homoserine-lactone synthase (193 aa).

Belongs to the autoinducer synthase family.

It catalyses the reaction a fatty acyl-[ACP] + S-adenosyl-L-methionine = an N-acyl-L-homoserine lactone + S-methyl-5'-thioadenosine + holo-[ACP] + H(+). Required for the synthesis of OHHL (N-(3-oxohexanoyl)-L-homoserine lactone) also known as VAI or N-(beta-ketocaproyl)homoserine lactone or 3-oxo-N-(tetrahydro-2-oxo-3-furanyl)-hexanamide, an autoinducer molecule which binds to LuxR and thus acts in bioluminescence regulation. This is Acyl-homoserine-lactone synthase (luxI) from Aliivibrio fischeri (strain ATCC 700601 / ES114) (Vibrio fischeri).